Consider the following 371-residue polypeptide: Chaperone protein DnaJ (371 aa).

The 65-residue stretch at 5–69 folds into the J domain; it reads DYYEVLGLSK…QKRAQYDQFG (65 aa). The CR-type zinc finger occupies 133–215; sequence GKELNVEIPV…CHGSGKVRKR (83 aa). Residues Cys-146, Cys-149, Cys-163, Cys-166, Cys-189, Cys-192, Cys-203, and Cys-206 each contribute to the Zn(2+) site. CXXCXGXG motif repeat units follow at residues 146-153, 163-170, 189-196, and 203-210; these read CDTCKGSG, CKHCSGSG, CSHCSGTG, and CTTCHGSG.

The protein belongs to the DnaJ family. As to quaternary structure, homodimer. Zn(2+) is required as a cofactor.

The protein localises to the cytoplasm. Its function is as follows. Participates actively in the response to hyperosmotic and heat shock by preventing the aggregation of stress-denatured proteins and by disaggregating proteins, also in an autonomous, DnaK-independent fashion. Unfolded proteins bind initially to DnaJ; upon interaction with the DnaJ-bound protein, DnaK hydrolyzes its bound ATP, resulting in the formation of a stable complex. GrpE releases ADP from DnaK; ATP binding to DnaK triggers the release of the substrate protein, thus completing the reaction cycle. Several rounds of ATP-dependent interactions between DnaJ, DnaK and GrpE are required for fully efficient folding. Also involved, together with DnaK and GrpE, in the DNA replication of plasmids through activation of initiation proteins. The sequence is that of Chaperone protein DnaJ from Bacillus cereus (strain 03BB102).